The following is an 856-amino-acid chain: Inactive rhomboid protein 2 (856 aa).

The disordered stretch occupies residues 1 to 115 (MASADKNGGS…PGFRRQASLS (115 aa)). The Cytoplasmic portion of the chain corresponds to 1–409 (MASADKNGGS…HRPYFTYWLT (409 aa)). Ser90 is modified (phosphoserine). Residues 94–106 (PRSRWQESSEKRP) are compositionally biased toward basic and acidic residues. A phosphoserine mark is found at Ser113 and Ser117. The interval 165-184 (PSQEAPSFQGTESPKPCKMP) is disordered. Positions 191–271 (ARGRAFRHPE…GQRCRVVKRS (81 aa)) are involved in interaction with FRMD8. Ser323, Ser325, and Ser328 each carry phosphoserine. Residues 410 to 430 (FVHVIITLLVICTYGIAPVGF) traverse the membrane as a helical segment. The Lumenal segment spans residues 431–660 (AQHVTTQLVL…PDQFYRLWLS (230 aa)). A disordered region spans residues 531–553 (GPPMDKSDLGQKRTSGAVCHQDP). Residues 661 to 681 (LFLHAGVVHCLVSVVFQMTIL) form a helical membrane-spanning segment. Residues 682-692 (RDLEKLAGWHR) are Cytoplasmic-facing. A helical transmembrane segment spans residues 693–713 (IAIIFILSGITGNLASAIFLP). The Lumenal portion of the chain corresponds to 714–715 (YR). A helical membrane pass occupies residues 716-736 (AEVGPAGSQFGLLACLFVELF). The Cytoplasmic segment spans residues 737–747 (QSWPLLERPWK). Residues 748 to 768 (AFLNLSAIVLFLFICGLLPWI) traverse the membrane as a helical segment. The Lumenal portion of the chain corresponds to 769–773 (DNIAH). The chain crosses the membrane as a helical span at residues 774–794 (IFGFLSGLLLAFAFLPYITFG). Over 795–802 (TSDKYRKR) the chain is Cytoplasmic. The helical transmembrane segment at 803–823 (ALILVSLLAFAGLFAALVLWL) threads the bilayer. Residues 824-856 (YIYPINWPWIEHLTCFPFTSRFCEKYELDQVLH) lie on the Lumenal side of the membrane.

This sequence belongs to the peptidase S54 family. In terms of assembly, interacts with EGF. Interacts (via cytoplasmic N-terminus) with FRMD8/iTAP; this interaction leads to mutual protein stabilization. Interacts with ADAM17/TACE. Found in the epidermis and esophageal epithelium.

It is found in the endoplasmic reticulum membrane. The protein resides in the cell membrane. Functionally, regulates ADAM17 protease, a sheddase of the epidermal growth factor (EGF) receptor ligands and TNF, thereby plays a role in sleep, cell survival, proliferation, migration and inflammation. Does not exhibit any protease activity on its own. This chain is Inactive rhomboid protein 2 (RHBDF2), found in Homo sapiens (Human).